Reading from the N-terminus, the 380-residue chain is Kappa-type opioid receptor (380 aa).

At 1–57 the chain is on the extracellular side; it reads MGRRRQGPAQPASELPARNACLLPNGSAWLPGWAEPDGNGSAGPQDEQLEPAHISPA. N-linked (GlcNAc...) asparagine glycosylation is found at Asn-25 and Asn-39. A helical transmembrane segment spans residues 58–85; it reads IPVIITAVYSVVFVVGLVGNSLVMFVII. Residues 86-95 lie on the Cytoplasmic side of the membrane; it reads RYTKMKTATN. The chain crosses the membrane as a helical span at residues 96 to 119; the sequence is IYIFNLALADALVTTTMPFQSTVY. Residues 120 to 132 lie on the Extracellular side of the membrane; it reads LMNSWPFGDVLCK. Cys-131 and Cys-210 form a disulfide bridge. A helical transmembrane segment spans residues 133–154; it reads IVISIDYYNMFTSIFTLTMMSV. The Cytoplasmic portion of the chain corresponds to 155–173; it reads DRYIAVCHPVKALDFRTPL. A helical transmembrane segment spans residues 174–196; the sequence is KAKIINICIWLLSSSVGISAIIL. Residues 197-222 are Extracellular-facing; the sequence is GGTKVREDVDIIECSLQFPDDDYSWW. A helical membrane pass occupies residues 223 to 247; the sequence is DLFMKICVFVFAFVIPVLIIIVCYT. The Cytoplasmic segment spans residues 248–274; it reads LMILRLKSVRLLSGSREKDRNLRRITR. The chain crosses the membrane as a helical span at residues 275–296; it reads LVLVVVAVFIICWTPIHIFILV. Residues 297 to 311 lie on the Extracellular side of the membrane; that stretch reads EALGSTSHSTAALSS. The chain crosses the membrane as a helical span at residues 312–333; the sequence is YYFCIALGYTNSSLNPILYAFL. Residues 334–380 lie on the Cytoplasmic side of the membrane; it reads DENFKRCFRDFCFPIKMRMERQSTSRVRNTVQDPAYMRNVDGVNKPV. Cys-345 carries the S-palmitoyl cysteine lipid modification.

Belongs to the G-protein coupled receptor 1 family. As to quaternary structure, interacts with NHERF1. Interacts with GABARAPL1.

The protein localises to the cell membrane. G-protein coupled opioid receptor that functions as a receptor for endogenous alpha-neoendorphins and dynorphins, but has low affinity for beta-endorphins. Also functions as a receptor for various synthetic opioids and for the psychoactive diterpene salvinorin A. Ligand binding causes a conformation change that triggers signaling via guanine nucleotide-binding proteins (G proteins) and modulates the activity of down-stream effectors, such as adenylate cyclase. Signaling leads to the inhibition of adenylate cyclase activity. Inhibits neurotransmitter release by reducing calcium ion currents and increasing potassium ion conductance. Plays a role in the perception of pain. Plays a role in mediating reduced physical activity upon treatment with synthetic opioids. Plays a role in the regulation of salivation in response to synthetic opioids. May play a role in arousal and regulation of autonomic and neuroendocrine functions. This is Kappa-type opioid receptor (OPRK1) from Cavia porcellus (Guinea pig).